The chain runs to 156 residues: ATP synthase subunit b (156 aa).

The helical transmembrane segment at 3 to 23 (ITLTIFAQALAFAGLIWIVAT) threads the bilayer.

Belongs to the ATPase B chain family. In terms of assembly, F-type ATPases have 2 components, F(1) - the catalytic core - and F(0) - the membrane proton channel. F(1) has five subunits: alpha(3), beta(3), gamma(1), delta(1), epsilon(1). F(0) has three main subunits: a(1), b(2) and c(10-14). The alpha and beta chains form an alternating ring which encloses part of the gamma chain. F(1) is attached to F(0) by a central stalk formed by the gamma and epsilon chains, while a peripheral stalk is formed by the delta and b chains.

It is found in the cell inner membrane. F(1)F(0) ATP synthase produces ATP from ADP in the presence of a proton or sodium gradient. F-type ATPases consist of two structural domains, F(1) containing the extramembraneous catalytic core and F(0) containing the membrane proton channel, linked together by a central stalk and a peripheral stalk. During catalysis, ATP synthesis in the catalytic domain of F(1) is coupled via a rotary mechanism of the central stalk subunits to proton translocation. Functionally, component of the F(0) channel, it forms part of the peripheral stalk, linking F(1) to F(0). The chain is ATP synthase subunit b from Xanthomonas axonopodis pv. citri (strain 306).